A 729-amino-acid chain; its full sequence is Elongation factor 2 (729 aa).

One can recognise a tr-type G domain in the interval 19-262; sequence EQIRNIAIAA…MVCEHFPNPV (244 aa). GTP is bound by residues 28–35, 94–98, and 148–151; these read AHVDHGKT, DTPGH, and NKVD. At H597 the chain carries Diphthamide.

This sequence belongs to the TRAFAC class translation factor GTPase superfamily. Classic translation factor GTPase family. EF-G/EF-2 subfamily.

The protein localises to the cytoplasm. In terms of biological role, catalyzes the GTP-dependent ribosomal translocation step during translation elongation. During this step, the ribosome changes from the pre-translocational (PRE) to the post-translocational (POST) state as the newly formed A-site-bound peptidyl-tRNA and P-site-bound deacylated tRNA move to the P and E sites, respectively. Catalyzes the coordinated movement of the two tRNA molecules, the mRNA and conformational changes in the ribosome. The chain is Elongation factor 2 from Natronomonas pharaonis (strain ATCC 35678 / DSM 2160 / CIP 103997 / JCM 8858 / NBRC 14720 / NCIMB 2260 / Gabara) (Halobacterium pharaonis).